The sequence spans 488 residues: Ribosomal RNA small subunit methyltransferase F (488 aa).

S-adenosyl-L-methionine-binding positions include 135 to 141 (ASAPGSK), Glu-159, Asp-186, and Asp-204. The Nucleophile role is filled by Cys-257.

Belongs to the class I-like SAM-binding methyltransferase superfamily. RsmB/NOP family.

The protein localises to the cytoplasm. The catalysed reaction is cytidine(1407) in 16S rRNA + S-adenosyl-L-methionine = 5-methylcytidine(1407) in 16S rRNA + S-adenosyl-L-homocysteine + H(+). In terms of biological role, specifically methylates the cytosine at position 1407 (m5C1407) of 16S rRNA. This Shewanella pealeana (strain ATCC 700345 / ANG-SQ1) protein is Ribosomal RNA small subunit methyltransferase F.